We begin with the raw amino-acid sequence, 493 residues long: GPI alpha-1,6-mannosyltransferase 2 (493 aa).

Over 1 to 13 the chain is Cytoplasmic; the sequence is MGLLDPSQKEVLR. Residues 14-34 traverse the membrane as a helical segment; the sequence is FAVNCRILTLVLQALFNLIIP. Topologically, residues 35–77 are lumenal; sequence DHHADAFCPPRLAPSGSADQLVEGLLGGLSRWDAEHFLFIAEH. The chain crosses the membrane as a helical span at residues 78-98; sequence GYLYEHNFAFFPGFPLALLMG. Over 99–113 the chain is Cytoplasmic; it reads TELLRPLQGLLSQRS. Residues 114–134 form a helical membrane-spanning segment; that stretch reads CLLVSVALLNLLFSVLAAVAL. Topologically, residues 135 to 136 are lumenal; the sequence is HD. The chain crosses the membrane as a helical span at residues 137-157; that stretch reads LGCLVLHCPRQALCAALLFCI. Residues 158–161 lie on the Cytoplasmic side of the membrane; sequence SPAN. The chain crosses the membrane as a helical span at residues 162–182; the sequence is VFLAAGYSEALFAFLTFSAMG. The Lumenal segment spans residues 183 to 192; that stretch reads QLERGRGWAS. A helical transmembrane segment spans residues 193-213; the sequence is GLLFALAAGVRSNGLVSLGFL. At 214–234 the chain is on the cytoplasmic side; it reads LHSQCRGFCSSLAVLSPWKPL. A helical membrane pass occupies residues 235 to 255; the sequence is VKLMASVCLSVLIVSLPFALF. The Lumenal portion of the chain corresponds to 256–327; the sequence is QYRAYIQFCS…RYYELKQVPN (72 aa). A helical transmembrane segment spans residues 328–348; sequence FLLATPVTVLVVWATWTYVTT. Residues 349-378 are Cytoplasmic-facing; it reads HPWLCLTLGLQRTKDRENPEKPHRGFLSPK. A helical transmembrane segment spans residues 379–399; that stretch reads VFVYLVHAAALLVFGGLCMHV. Residues 400–469 are Lumenal-facing; the sequence is QVLTRFLASS…DWKRCSPVTR (70 aa). A helical transmembrane segment spans residues 470 to 490; sequence CVLVYFLTYWLLGLILHCNFL. Residues 491 to 493 are Cytoplasmic-facing; that stretch reads PWT.

Belongs to the PIGV family. Post-translationally, not N-glycosylated.

The protein localises to the endoplasmic reticulum membrane. It participates in glycolipid biosynthesis; glycosylphosphatidylinositol-anchor biosynthesis. In terms of biological role, alpha-1,6-mannosyltransferase that catalyzes the transfer of the second mannose, via an alpha-1,6 bond, from a dolichol-phosphate-mannose (Dol-P-Man) to the alpha-D-Man-(1-&gt;4)-alpha-D-GlcN-(1-&gt;6)-(1-radyl,2-acyl-sn-glycero-3-phospho)-2-acyl-inositol (also termed H2) intermediate to generate an alpha-D-Man-(1-&gt;6)-alpha-D-Man-(1-&gt;4)-alpha-D-GlcN-(1-&gt;6)-(1-radyl,2-acyl-sn-glycero-3-phospho)-2-acyl-inositol (also termed H3) and participates in the seventh step of the glycosylphosphatidylinositol-anchor biosynthesis. Also transfers the second mannose on a 2-PEtn-alpha-D-Man-(1-&gt;4)-alpha-D-GlcN-(1-&gt;6)-(1-radyl,2-acyl-sn-glycero-3-phospho)-2-acyl-inositol (also termed H5). The protein is GPI alpha-1,6-mannosyltransferase 2 of Mus musculus (Mouse).